Consider the following 328-residue polypeptide: Arabinose 5-phosphate isomerase KdsD (328 aa).

The SIS domain maps to 42-184 (CEKMFWCKGK…AVALLKARGF (143 aa)). Substrate contacts are provided by residues 75–76 (GT), H82, H88, 114–123 (ALIPVLKRLH), 148–150 (KVA), T222, and D275. Residue H82 participates in Zn(2+) binding. One can recognise a CBS 1 domain in the interval 210–268 (MHTGDEIPHVKKTASLRDALLEVTRKNLGMTVICDDNMMIEGIFTDGDLRRVFDMGVDV). The region spanning 277-328 (MTPGGIRVRPGILAVEALNLMQSRHITSVMVADGDHLLGVLHMHDLLRAGVV) is the CBS 2 domain.

The protein belongs to the SIS family. GutQ/KpsF subfamily. As to quaternary structure, homotetramer.

It catalyses the reaction D-arabinose 5-phosphate = D-ribulose 5-phosphate. Its pathway is carbohydrate biosynthesis; 3-deoxy-D-manno-octulosonate biosynthesis; 3-deoxy-D-manno-octulosonate from D-ribulose 5-phosphate: step 1/3. The protein operates within bacterial outer membrane biogenesis; lipopolysaccharide biosynthesis. Completely inhibited by 10 uM of nickel, copper, cadmium and mercury ions. Inhibited by zinc with an IC(50) of 1-3 uM. Metal ion inhibition may be a mechanism to control activity in vivo. Functionally, involved in the biosynthesis of 3-deoxy-D-manno-octulosonate (KDO), a unique 8-carbon sugar component of lipopolysaccharides (LPSs). KdsD is not essential in the KDO biosynthesis and can be substituted by GutQ. Catalyzes the reversible aldol-ketol isomerization between D-ribulose 5-phosphate (Ru5P) and D-arabinose 5-phosphate (A5P). This Escherichia coli (strain K12) protein is Arabinose 5-phosphate isomerase KdsD (kdsD).